A 258-amino-acid chain; its full sequence is MPKTLTEKLNAIKAAGKGIFVPYIMAGDHEKGLDGLGETIHFLEDLGVSAIEVGIPFSDPVADGPVIEEAGLRSLAHGTSTQALVETLKTIETEIPLVIMTYFNPLFQYGVENFVKDLADTAVKGLIIPDLPHEHANFVEPFLADTDIALIPLVSLTTGIERQKELIEGAEGFVYAVAINGVTGKSGNYRADLDKHLAQLHQVADIPVLTGFGVSSQADLERFNAVSDGVIVGSKIVKALHQGEPIQDFIKQAVAYQK.

Active-site proton acceptor residues include glutamate 52 and aspartate 63.

It belongs to the TrpA family. As to quaternary structure, tetramer of two alpha and two beta chains.

It carries out the reaction (1S,2R)-1-C-(indol-3-yl)glycerol 3-phosphate + L-serine = D-glyceraldehyde 3-phosphate + L-tryptophan + H2O. It functions in the pathway amino-acid biosynthesis; L-tryptophan biosynthesis; L-tryptophan from chorismate: step 5/5. Its function is as follows. The alpha subunit is responsible for the aldol cleavage of indoleglycerol phosphate to indole and glyceraldehyde 3-phosphate. This chain is Tryptophan synthase alpha chain, found in Streptococcus pneumoniae (strain JJA).